A 521-amino-acid chain; its full sequence is SET and MYND domain-containing protein DDB_G0292140 (521 aa).

The interval 1 to 101 is disordered; sequence MDGVIESPSN…KIKKSKKSIK (101 aa). Residues 12–55 show a composition bias toward low complexity; that stretch reads TIKISPSTSDSSTTTPIITTPPTQSTATVTTKAAATTTTTEAST. Residues 56-65 show a composition bias toward pro residues; sequence TPPPPQPTPT. Residues 66–90 show a composition bias toward low complexity; it reads PTQSTATVTKEVETTTETIPPIVTK. Residues 91-101 are compositionally biased toward basic residues; the sequence is GKIKKSKKSIK. The SET domain occupies 122–406; the sequence is WPIHVYSHPI…EGDELTISYI (285 aa). Residues cysteine 167, cysteine 170, cysteine 188, cysteine 191, cysteine 197, cysteine 201, histidine 209, and cysteine 213 each contribute to the Zn(2+) site. The segment at 167–213 adopts an MYND-type zinc-finger fold; the sequence is CQHCFLEVPLNQQILPTDFYMCEGCQRVGYCSANCRCIDYSQHRFEC. Residues 442–521 are disordered; that stretch reads QTGTLEKDDD…QDHQNNDKSN (80 aa). The segment covering 448–469 has biased composition (acidic residues); that stretch reads KDDDDNDDEKEKMDEDDDEKDD. The span at 470–485 shows a compositional bias: basic and acidic residues; the sequence is DINNKNDKKSKYKSDG. Acidic residues predominate over residues 486–495; it reads STDDEEDEDN. Positions 497-514 are enriched in low complexity; sequence NNKNNNKNKNNNSNNQDH.

It belongs to the class V-like SAM-binding methyltransferase superfamily.

Probable methyltransferase. The chain is SET and MYND domain-containing protein DDB_G0292140 from Dictyostelium discoideum (Social amoeba).